We begin with the raw amino-acid sequence, 351 residues long: Divinyl chlorophyll a/b light-harvesting protein PcbA (351 aa).

Helical transmembrane passes span 27–47 (FIAA…AFTL), 64–84 (LIAL…GTFV), 89–109 (VTAI…GGLL), 202–222 (VMGG…FHIA), 242–262 (AILS…AFWC), and 305–325 (LTNV…WHAL).

Belongs to the PsbB/PsbC family. IsiA/Pcb subfamily. In terms of assembly, the antenna complex consists of divinyl chlorophylls (a and b) and divinyl chlorophyll a/b binding proteins and binds more divinyl chlorophyll b than does the antenna complex from high-light-adapted Prochlorococcus. It depends on divinyl chlorophyll a as a cofactor. The cofactor is divinyl chlorophyll b.

The protein localises to the cellular thylakoid membrane. The antenna complex functions as a light receptor, it captures and delivers excitation energy to photosystems II and I. The Prochlorales pcb genes are not related to higher plant LHCs. The protein is Divinyl chlorophyll a/b light-harvesting protein PcbA (pcbA) of Prochlorococcus marinus (strain SARG / CCMP1375 / SS120).